The following is a 106-amino-acid chain: MLNDLKIEELLDKVDSRYGLVVATAKRARQINEYTATLGLNESLGIPGPQVHTRSQHPLTIAIEELRAGKLKVGFREPAREAAEPAGEAPEEQQRAAGEREDQGAA.

Residues 76–106 are disordered; the sequence is REPAREAAEPAGEAPEEQQRAAGEREDQGAA. The span at 92–106 shows a compositional bias: basic and acidic residues; that stretch reads EQQRAAGEREDQGAA.

The protein belongs to the RNA polymerase subunit omega family. As to quaternary structure, the RNAP catalytic core consists of 2 alpha, 1 beta, 1 beta' and 1 omega subunit. When a sigma factor is associated with the core the holoenzyme is formed, which can initiate transcription.

It catalyses the reaction RNA(n) + a ribonucleoside 5'-triphosphate = RNA(n+1) + diphosphate. Its function is as follows. Promotes RNA polymerase assembly. Latches the N- and C-terminal regions of the beta' subunit thereby facilitating its interaction with the beta and alpha subunits. The protein is DNA-directed RNA polymerase subunit omega of Rubrobacter xylanophilus (strain DSM 9941 / JCM 11954 / NBRC 16129 / PRD-1).